The chain runs to 257 residues: Short chain dehydrogenase ausX (257 aa).

Positions 11, 57, 119, 151, 155, and 184 each coordinate NADP(+). The active-site Proton acceptor is Tyr-151. Lys-155 serves as the catalytic Lowers pKa of active site Tyr.

The protein belongs to the short-chain dehydrogenases/reductases (SDR) family.

It functions in the pathway secondary metabolite biosynthesis; terpenoid biosynthesis. Short chain dehydrogenase; part of the gene cluster that mediates the biosynthesis of calidodehydroaustin, a fungal meroterpenoid. The first step of the pathway is the synthesis of 3,5-dimethylorsellinic acid by the polyketide synthase ausA. 3,5-dimethylorsellinic acid is then prenylated by the polyprenyl transferase ausN. Further epoxidation by the FAD-dependent monooxygenase ausM and cyclization by the probable terpene cyclase ausL lead to the formation of protoaustinoid A. Protoaustinoid A is then oxidized to spiro-lactone preaustinoid A3 by the combined action of the FAD-binding monooxygenases ausB and ausC, and the dioxygenase ausE. Acid-catalyzed keto-rearrangement and ring contraction of the tetraketide portion of preaustinoid A3 by ausJ lead to the formation of preaustinoid A4. The aldo-keto reductase ausK, with the help of ausH, is involved in the next step by transforming preaustinoid A4 into isoaustinone which is in turn hydroxylated by the P450 monooxygenase ausI to form austinolide. The cytochrome P450 monooxygenase ausG modifies austinolide to austinol. Austinol is further acetylated to austin by the O-acetyltransferase ausP, which spontaneously changes to dehydroaustin. The cytochrome P450 monooxygenase ausR then converts dehydroaustin is into 7-dehydrodehydroaustin. The hydroxylation catalyzed by ausR permits the O-acetyltransferase ausQ to add an additional acetyl group to the molecule, leading to the formation of acetoxydehydroaustin. The short chain dehydrogenase ausT catalyzes the reduction of the double bond present between carbon atoms 1 and 2 to convert 7-dehydrodehydroaustin into 1,2-dihydro-7-hydroxydehydroaustin. AusQ catalyzes not only an acetylation reaction but also the addition of the PKS ausV diketide product to 1,2-dihydro-7-hydroxydehydroaustin, forming precalidodehydroaustin. Finally, the iron/alpha-ketoglutarate-dependent dioxygenase converts precalidodehydroaustin into calidodehydroaustin. The chain is Short chain dehydrogenase ausX from Aspergillus calidoustus.